The following is a 640-amino-acid chain: Threonine--tRNA ligase (640 aa).

Residues 1-61 enclose the TGS domain; sequence MPIITLPNGD…TEDSTLQIIT (61 aa). Positions 242-533 are catalytic; the sequence is DHRKIGKALD…LIEHYAGFMP (292 aa). Zn(2+)-binding residues include cysteine 333, histidine 384, and histidine 510.

The protein belongs to the class-II aminoacyl-tRNA synthetase family. As to quaternary structure, homodimer. Requires Zn(2+) as cofactor.

The protein resides in the cytoplasm. The catalysed reaction is tRNA(Thr) + L-threonine + ATP = L-threonyl-tRNA(Thr) + AMP + diphosphate + H(+). Catalyzes the attachment of threonine to tRNA(Thr) in a two-step reaction: L-threonine is first activated by ATP to form Thr-AMP and then transferred to the acceptor end of tRNA(Thr). Also edits incorrectly charged L-seryl-tRNA(Thr). The sequence is that of Threonine--tRNA ligase from Acinetobacter baumannii (strain SDF).